The following is a 701-amino-acid chain: Reverse gyrase subunit A (701 aa).

Residues 41 to 197 (MVLFIVESPN…NIYRAEFHEV (157 aa)) form the Toprim domain. Glutamate 47 contributes to the Mg(2+) binding site. An RG C-terminal-type zinc finger spans residues 117–143 (IKKCLDCGHQFVDEDKCPRCGSENIDD). The Zn(2+) site is built by cysteine 120, cysteine 123, cysteine 133, and cysteine 136. Aspartate 166 is a binding site for Mg(2+). The region spanning 213 to 602 (NTNRVKAQLV…SFKKELIEIW (390 aa)) is the Topo IA-type catalytic domain. Tyrosine 352 (O-(5'-phospho-DNA)-tyrosine intermediate) is an active-site residue.

It belongs to the type IA topoisomerase family. As to quaternary structure, heterodimer of an RgyA and RgyB subunit. Zn(2+) is required as a cofactor. It depends on Mg(2+) as a cofactor.

Its subcellular location is the cytoplasm. Modifies the topological state of DNA by introducing positive supercoils in an ATP-dependent process. Binds to single-stranded DNA, transiently cleaves and then rejoins the end, introducing a positive supercoil in the process. The scissile phosphodiester is attacked by the catalytic tyrosine of the enzyme, resulting in the formation of a DNA-(5'-phosphotyrosyl)-enzyme intermediate. Probably involved in rewinding DNA strands in regions of the chromosome that have opened up to allow replication, transcription, DNA repair or for DNA protection. Reconstituted holoenzyme binds dsDNA a bit better than ssDNA, this subunit preferentially binds ssDNA. In isolation this subunit relaxes negatively-supercoiled DNA, and stimulates the endogenous ATPase activity of the RgyB subunit. In Nanoarchaeum equitans (strain Kin4-M), this protein is Reverse gyrase subunit A.